A 396-amino-acid polypeptide reads, in one-letter code: MSTTQQPHWSLQKSFAERVESSSHPLTSYLFRLMEVKQSNLCLSADVEHARELLALADKIGPSIVVLKTHYDLITGWDYHPHTGTGAKLAALARKHGFLIFEDRKFVDIGSTVQKQYTAGTARIVEWAHITNADIHAGEAMVSAMAQAAQKWRERIPYEVKTSVSVGTPVADQFADEEAEDQVDELRKIVPRENSTSKEKDTDGRKGSIVSITTVTQTYEPADSPRLAKTISEGDEAVFPGIEEAPLDRGLLILAQMSSKGCLMDGKYTWECVKAARKNKDFVMGYVAQQNLNGITKEDLAPGYEDGETSTEEEAQADNFIHMTPGCKLPPPGEEAPQGDGLGQQYNTPDNLVNIKGTDIAIVGRGIITASDPPAEAERYRRKAWKAYQDRRERLA.

Residues Asp46, Lys68–His70, Asp103–Thr112, Tyr346, and Arg365 contribute to the substrate site. The active-site Proton donor is Lys105.

The protein belongs to the OMP decarboxylase family.

The catalysed reaction is orotidine 5'-phosphate + H(+) = UMP + CO2. It functions in the pathway pyrimidine metabolism; UMP biosynthesis via de novo pathway; UMP from orotate: step 2/2. The polypeptide is Orotidine 5'-phosphate decarboxylase (URA3) (Sordaria macrospora (strain ATCC MYA-333 / DSM 997 / K(L3346) / K-hell)).